A 132-amino-acid chain; its full sequence is Fumarate reductase subunit C (132 aa).

3 helical membrane-spanning segments follow: residues 30-50, 70-90, and 110-130; these read ATSV…LCFA, IVVF…VTYF, and VVRN…LVLV.

It belongs to the FrdC family. Part of an enzyme complex containing four subunits: a flavoprotein (FrdA), an iron-sulfur protein (FrdB), and two hydrophobic anchor proteins (FrdC and FrdD).

Its subcellular location is the cell inner membrane. Anchors the catalytic components of the fumarate reductase complex to the cell membrane, binds quinones. This is Fumarate reductase subunit C from Haemophilus influenzae (strain ATCC 51907 / DSM 11121 / KW20 / Rd).